We begin with the raw amino-acid sequence, 123 residues long: Holo-[acyl-carrier-protein] synthase (123 aa).

Residues Asp-7 and Glu-56 each coordinate Mg(2+).

This sequence belongs to the P-Pant transferase superfamily. AcpS family. The cofactor is Mg(2+).

Its subcellular location is the cytoplasm. The catalysed reaction is apo-[ACP] + CoA = holo-[ACP] + adenosine 3',5'-bisphosphate + H(+). Functionally, transfers the 4'-phosphopantetheine moiety from coenzyme A to a Ser of acyl-carrier-protein. This Carboxydothermus hydrogenoformans (strain ATCC BAA-161 / DSM 6008 / Z-2901) protein is Holo-[acyl-carrier-protein] synthase.